The sequence spans 503 residues: Trehalose-6-phosphate synthase (503 aa).

Arg-22 provides a ligand contact to D-glucose 6-phosphate. 42–43 (GG) lines the UDP-alpha-D-glucose pocket. 2 residues coordinate D-glucose 6-phosphate: Tyr-94 and Asp-148. Residues Arg-290 and Lys-295 each contribute to the UDP-alpha-D-glucose site. Arg-328 contributes to the D-glucose 6-phosphate binding site. 393 to 397 (LVAKE) contributes to the UDP-alpha-D-glucose binding site. A disordered region spans residues 481 to 503 (GETGDSGVTGESTPAPESDSGSF).

This sequence belongs to the glycosyltransferase 20 family. In terms of assembly, homotetramer.

The enzyme catalyses ADP-alpha-D-glucose + D-glucose 6-phosphate = alpha,alpha-trehalose 6-phosphate + ADP + H(+). It carries out the reaction CDP-alpha-D-glucose + D-glucose 6-phosphate = alpha,alpha-trehalose 6-phosphate + CDP + H(+). The catalysed reaction is GDP-alpha-D-glucose + D-glucose 6-phosphate = alpha,alpha-trehalose 6-phosphate + GDP + H(+). It catalyses the reaction TDP-alpha-D-glucose + D-glucose 6-phosphate = 5-methyl-UDP + alpha,alpha-trehalose 6-phosphate + H(+). The enzyme catalyses D-glucose 6-phosphate + UDP-alpha-D-glucose = alpha,alpha-trehalose 6-phosphate + UDP + H(+). It participates in glycan biosynthesis; trehalose biosynthesis. Its activity is regulated as follows. Stimulated by the polynucleotide FII (physiological activator), and by chondroitin sulfate (CS) and heparin. Activation by the polyanion is inhibited by high salt concentration as well as by high concentrations of mononucleoside phosphates. Functionally, involved in the production of glycogen and alpha-glucan via the TreS-Pep2 branch involved in the biosynthesis of maltose-1-phosphate (M1P), and probably in the osmoprotection via the biosynthesis of trehalose. Catalyzes the transfer of glucose from UDP-glucose (UDP-Glc) to glucose-6-phosphate (Glc-6-P) to form trehalose-6-phosphate. ADP-Glc, CDP-Glc, GDP-Glc and TDP-Glc are also glucosyl donors, however, when the pyrimidine sugar nucleotides (CDP-Glc, TDP-Glc and UDP-Glc) are used as substrates, there is an absolute requirement for a high molecular weight polyanion for activity. The polypeptide is Trehalose-6-phosphate synthase (Mycolicibacterium smegmatis (strain ATCC 700084 / mc(2)155) (Mycobacterium smegmatis)).